A 181-amino-acid chain; its full sequence is Putative manganese efflux pump MntP (181 aa).

The next 5 membrane-spanning stretches (helical) occupy residues 35-55 (IIFG…GSIA), 59-79 (VADW…LLMI), 102-122 (AATG…LAFI), 126-146 (ILIT…LGVM), and 161-181 (ILGG…HLTM).

This sequence belongs to the MntP (TC 9.B.29) family.

It is found in the cell inner membrane. Functionally, probably functions as a manganese efflux pump. In Nitrosomonas eutropha (strain DSM 101675 / C91 / Nm57), this protein is Putative manganese efflux pump MntP.